Reading from the N-terminus, the 2878-residue chain is Trinucleotide repeat-containing gene 18 protein (2878 aa).

Disordered stretches follow at residues 1 to 54 (MDGR…KYMA) and 102 to 194 (TQKD…SSRL). Residues 119–128 (TPSSRTPSGH) show a composition bias toward polar residues. Basic and acidic residues-rich tracts occupy residues 137–149 (SSRE…RAGR), 158–169 (GKKDPRAREEVS), and 179–194 (QEAR…SSRL). S199 bears the Phosphoserine mark. Disordered regions lie at residues 259-289 (ARPC…AGVY), 313-442 (FDER…KWKP), 487-507 (MPRA…AAHG), 540-655 (SPFG…DDEC), 865-1002 (AQEH…ALFT), 1033-1104 (ADGL…LESP), 1127-1146 (LEAQ…SEVS), 1171-1228 (LGTQ…DCDL), 1429-1535 (ELVK…DSSS), 1613-1668 (LGLS…DEDE), 1694-1718 (VPKN…RTLK), and 1737-1787 (EARS…GEQA). The span at 264–283 (SPLPPPPPLPPKGPPAPPSS) shows a compositional bias: pro residues. Composition is skewed to basic and acidic residues over residues 327–337 (RDVRAREREPG) and 350–362 (RLER…EKSS). Residues 376–390 (PPAARSSRSSPDARA) show a composition bias toward low complexity. Basic and acidic residues predominate over residues 396–411 (ELLKPEADPRPCERAP). Position 540 is a phosphoserine (S540). K549 participates in a covalent cross-link: Glycyl lysine isopeptide (Lys-Gly) (interchain with G-Cter in SUMO2). Composition is skewed to basic and acidic residues over residues 580-589 (LKRDPERPES) and 865-881 (AQEH…KRSL). A compositionally biased stretch (pro residues) spans 958-969 (SSPPPASPPPTP). Positions 972-993 (TRKEEAPENVVEKKDLELEKET) are enriched in basic and acidic residues. Phosphoserine occurs at positions 1053 and 1062. Over residues 1068–1088 (EPPRDSPEEEQLADREVKAEV) the composition is skewed to basic and acidic residues. A coiled-coil region spans residues 1410-1442 (LDFRMRLAEVQRRYKEKQRELVKLQRRRDSGDR). Residues 1429–1448 (ELVKLQRRRDSGDRHEDAHR) are compositionally biased toward basic and acidic residues. A compositionally biased stretch (basic residues) spans 1449–1463 (SLARRGPGRPRKRTH). S1469 is subject to Phosphoserine. Positions 1478–1492 (SSSGKGLSSKSLLTS) are enriched in low complexity. Residues 1745 to 1775 (SSEEDSFDQDDSSEEEEEELEEEEEDEEEEG) show a composition bias toward acidic residues. Residues S1789 and S1795 each carry the phosphoserine modification. Residues 1825-1835 (EQKARKKEERQ) are compositionally biased toward basic and acidic residues. Disordered stretches follow at residues 1825–2040 (EQKA…GAVS), 2052–2080 (FEAN…TPAP), and 2226–2681 (LLVP…RLPS). Positions 1876-1890 (AAPGPGSRASGPSSP) are enriched in low complexity. Basic and acidic residues-rich tracts occupy residues 1891 to 1900 (DKAKLVSEKG), 1925 to 1936 (LWTRRRSERIFL), 1966 to 1978 (PRKD…DRKD), and 2024 to 2034 (RGKEAKKENRG). A Phosphothreonine modification is found at T2077. Positions 2238–2247 (TSKDTGEVKE) are enriched in basic and acidic residues. Basic residues predominate over residues 2261 to 2270 (ARGRGRKPST). 2 stretches are compositionally biased toward basic and acidic residues: residues 2307 to 2316 (STPEPVDKRA) and 2409 to 2419 (AKEALLLREDP). Composition is skewed to low complexity over residues 2460–2470 (EPGPGLPLEDP), 2491–2520 (TTSS…SGSE), and 2540–2578 (RTCS…SSST). The span at 2579-2591 (TDEDSSCSSDEEA) shows a compositional bias: acidic residues. Positions 2631-2641 (TQPPPQPPPQP) are enriched in pro residues. Phosphoserine is present on S2681. The BAH domain occupies 2727-2872 (EMIRIGDCAV…PTTGMIFSTD (146 aa)).

The protein is Trinucleotide repeat-containing gene 18 protein (Tnrc18) of Mus musculus (Mouse).